The sequence spans 318 residues: tRNA pseudouridine synthase B (318 aa).

Catalysis depends on Asp-54, which acts as the Nucleophile.

Belongs to the pseudouridine synthase TruB family. Type 1 subfamily.

It carries out the reaction uridine(55) in tRNA = pseudouridine(55) in tRNA. Responsible for synthesis of pseudouridine from uracil-55 in the psi GC loop of transfer RNAs. In Ralstonia pickettii (strain 12J), this protein is tRNA pseudouridine synthase B.